The primary structure comprises 565 residues: Glucose starvation modulator protein 1 (565 aa).

Residues 20–48 (CVFCHQKHLQCSNERPCKNCVKRNIAHGC) constitute a DNA-binding region (zn(2)-C6 fungal-type). 2 disordered regions span residues 63 to 106 (GVSG…ESSN) and 250 to 269 (QVSP…NTLS). A compositionally biased stretch (polar residues) spans 82-93 (SPLSTSMSPTDS). The segment covering 252–269 (SPSPSNTSTSENNTNTLS) has biased composition (low complexity).

It belongs to the ERT1/acuK family.

The protein localises to the nucleus. Its function is as follows. Transcription factor which regulates nonfermentable carbon utilization. This is Glucose starvation modulator protein 1 (GSM1) from Candida dubliniensis (strain CD36 / ATCC MYA-646 / CBS 7987 / NCPF 3949 / NRRL Y-17841) (Yeast).